Here is a 145-residue protein sequence, read N- to C-terminus: Cell wall synthesis protein CwsA (145 aa).

A helical transmembrane segment spans residues 104 to 124 (WIFAGIAAAILAGGAVAFSIV).

The protein belongs to the CwsA family.

The protein resides in the cell membrane. Functionally, required for regulated cell division, cell wall synthesis and the maintenance of cell shape. The chain is Cell wall synthesis protein CwsA from Mycobacterium bovis (strain ATCC BAA-935 / AF2122/97).